Consider the following 116-residue polypeptide: Iron-sulfur cluster insertion protein ErpA (116 aa).

Iron-sulfur cluster-binding residues include C44, C108, and C110.

It belongs to the HesB/IscA family. In terms of assembly, homodimer. The cofactor is iron-sulfur cluster.

Required for insertion of 4Fe-4S clusters for at least IspG. The protein is Iron-sulfur cluster insertion protein ErpA of Shewanella piezotolerans (strain WP3 / JCM 13877).